Here is a 552-residue protein sequence, read N- to C-terminus: 3-hydroxy-3-methylglutaryl-coenzyme A reductase 1 (552 aa).

2 stretches are compositionally biased toward low complexity: residues 79–99 and 112–122; these read QHNQ…QQPQ and QQQQQQQQQQQ. Positions 79–138 are disordered; the sequence is QHNQQQQQKQQPSQDYIQQPQNDNNINSGKEQEQQQQQQQQQQQTPDITNQPTKTNKKIP. Positions 123-132 are enriched in polar residues; the sequence is TPDITNQPTK. E237 acts as the Charge relay system in catalysis. N-linked (GlcNAc...) asparagine glycosylation is present at N288. K369 functions as the Charge relay system in the catalytic mechanism. The N-linked (GlcNAc...) asparagine glycan is linked to N375. The active-site Charge relay system is the D445. H543 (proton donor) is an active-site residue.

It belongs to the HMG-CoA reductase family.

It localises to the endoplasmic reticulum membrane. It catalyses the reaction (R)-mevalonate + 2 NADP(+) + CoA = (3S)-3-hydroxy-3-methylglutaryl-CoA + 2 NADPH + 2 H(+). It functions in the pathway metabolic intermediate biosynthesis; (R)-mevalonate biosynthesis; (R)-mevalonate from acetyl-CoA: step 3/3. This transmembrane glycoprotein is involved in the control of cholesterol biosynthesis. It is the rate-limiting enzyme of the sterol biosynthesis. The protein is 3-hydroxy-3-methylglutaryl-coenzyme A reductase 1 (hmgA) of Dictyostelium discoideum (Social amoeba).